The sequence spans 230 residues: Heptaprenylglyceryl phosphate synthase (230 aa).

Sn-glycerol 1-phosphate is bound at residue Lys12. Residues Asp14 and Thr40 each coordinate Mg(2+). Residues 159–164 (YVEYSG), Gly189, and 209–210 (GD) contribute to the sn-glycerol 1-phosphate site.

Belongs to the GGGP/HepGP synthase family. Group I subfamily. As to quaternary structure, homodimer. Mg(2+) is required as a cofactor.

It catalyses the reaction sn-glycerol 1-phosphate + all-trans-heptaprenyl diphosphate = 3-heptaprenyl-sn-glycero-1-phosphate + diphosphate. It functions in the pathway membrane lipid metabolism; glycerophospholipid metabolism. Prenyltransferase that catalyzes in vivo the transfer of the heptaprenyl moiety of heptaprenyl pyrophosphate (HepPP; 35 carbon atoms) to the C3 hydroxyl of sn-glycerol-1-phosphate (G1P), producing heptaprenylglyceryl phosphate (HepGP). This reaction is an ether-bond-formation step in the biosynthesis of archaea-type G1P-based membrane lipids found in Bacillales. The sequence is that of Heptaprenylglyceryl phosphate synthase from Staphylococcus epidermidis (strain ATCC 35984 / DSM 28319 / BCRC 17069 / CCUG 31568 / BM 3577 / RP62A).